A 130-amino-acid polypeptide reads, in one-letter code: MARGVSYVSAAQLVPMLRDPRIAVVDVRDEERIYDAHIAGSHHYASDSFGERLPELAQATKGKETLVFHCALSKVRGPSCAQMYLDYLSEADEDSDVKNIMVLERGFNGWELSGRPVCRCKDAPCKGVCS.

One can recognise a Rhodanese domain in the interval 18–119; sequence RDPRIAVVDV…WELSGRPVCR (102 aa). Cys70 acts as the Cysteine persulfide intermediate in catalysis.

It carries out the reaction [glutaredoxin]-dithiol + arsenate + glutathione + H(+) = glutathionyl-S-S-[glutaredoxin] + arsenite + H2O. Functionally, possesses arsenate reductase activity in vitro. Catalyzes the reduction of arsenate [As(V)] to arsenite [As(III)]. May play a role in arsenic retention in roots. Its function is as follows. Possesses phosphatase activity towards p-nitrophenyl phosphate in vitro. The sequence is that of Arsenate reductase 2.2 (ACR2.2) from Oryza sativa subsp. japonica (Rice).